A 184-amino-acid polypeptide reads, in one-letter code: Photosystem I assembly protein Ycf4 (184 aa).

The next 2 helical transmembrane spans lie at 21–43 (NFCW…TSSY) and 58–80 (IFFP…SSYL).

Belongs to the Ycf4 family.

The protein localises to the plastid. The protein resides in the chloroplast thylakoid membrane. In terms of biological role, seems to be required for the assembly of the photosystem I complex. This is Photosystem I assembly protein Ycf4 from Calycanthus floridus var. glaucus (Eastern sweetshrub).